The primary structure comprises 275 residues: Voltage-dependent calcium channel gamma-5 subunit (275 aa).

The next 4 helical transmembrane spans lie at 8 to 28, 103 to 123, 129 to 149, and 176 to 196; these read ALTL…GIAV, FPLV…IGHI, ILAF…VVGL, and GWSF…GVMS.

Belongs to the PMP-22/EMP/MP20 family. CACNG subfamily. As to quaternary structure, the L-type calcium channel is composed of five subunits: alpha-1, alpha-2/delta, beta and gamma. Acts as an auxiliary subunit for AMPA-selective glutamate receptors (AMPARs). Found in a complex with GRIA1, GRIA2, GRIA3, GRIA4, CNIH2, CNIH3, CACNG2, CACNG3, CACNG4, CACNG7 and CACNG8. Interacts with GRIA1, GRIA2, GRIA3 and GRIA4.

Its subcellular location is the membrane. It localises to the postsynaptic density membrane. Functionally, regulates the gating properties of AMPA-selective glutamate receptors (AMPARs). Modulates their gating properties by accelerating their rates of activation, deactivation and desensitization. Displays subunit-specific AMPA receptor regulation. Shows specificity for GRIA1, GRIA4 and the long isoform of GRIA2. Thought to stabilize the calcium channel in an inactivated (closed) state. The protein is Voltage-dependent calcium channel gamma-5 subunit (CACNG5) of Homo sapiens (Human).